A 36-amino-acid chain; its full sequence is Potassium channel toxin alpha-KTx 11.3 (36 aa).

Intrachain disulfides connect Cys8–Cys27, Cys13–Cys33, and Cys17–Cys35.

It belongs to the short scorpion toxin superfamily. Potassium channel inhibitor family. Alpha-KTx 11 subfamily. Expressed by the venom gland.

The protein localises to the secreted. Its function is as follows. Binds and inhibits voltage-sensitive potassium channels. Inhibits the vertebrate potassium channel Kv1.1/KCNA1 with low affinity. This is Potassium channel toxin alpha-KTx 11.3 from Parabuthus granulatus (Granulated thick-tailed scorpion).